Consider the following 538-residue polypeptide: MFFLYTDFFLSLVAVPAAAPVCQPKSATNGQPPAPAPTPTPRLSISSRATVVARMEGTSQGGLQTVMKWKTVVAIFVVVVVYLVTGGLVFRALEQPFESSQKNTIALEKAEFLRDHVCVSPQELETLIQHALDADNAGVSPIGNSSNNSSHWDLGSAFFFAGTVITTIGYGNIAPSTEGGKIFCILYAIFGIPLFGFLLAGIGDQLGTIFGKSIARVEKVFRKKQVSQTKIRVISTILFILAGCIVFVTIPAVIFKYIEGWTALESIYFVVVTLTTVGFGDFVAGGNAGINYREWYKPLVWFWILVGLAYFAAVLSMIGDWLRVLSKKTKEEVGEIKAHAAEWKANVTAEFRETRRRLSVEIHDKLQRAATIRSMERRRLGLDQRAHSLDMLSPEKRSVFAALDTGRFKASSQESINNRPNNLRLKGPEQLNKHGQGASEDNIINKFGSTSRLTKRKNKDLKKTLPEDVQKIYKTFRNYSLDEEKKEEETEKMCNSDNSSTAMLTDCIQQHAELENGMIPTDTKDREPENNSLLEDRN.

At 1–71 the chain is on the cytoplasmic side; the sequence is MFFLYTDFFL…GLQTVMKWKT (71 aa). The chain crosses the membrane as a helical span at residues 72-92; the sequence is VVAIFVVVVVYLVTGGLVFRA. N-linked (GlcNAc...) asparagine glycosylation is found at Asn144, Asn147, and Asn148. An intramembrane region (pore-forming) is located at residues 154 to 180; sequence LGSAFFFAGTVITTIGYGNIAPSTEGG. Thr167, Ile168, Gly169, and Tyr170 together coordinate K(+). Residues 167–172 are selectivity filter 1; it reads TIGYGN. The helical transmembrane segment at 182–202 threads the bilayer; it reads IFCILYAIFGIPLFGFLLAGI. Topologically, residues 203-233 are cytoplasmic; that stretch reads GDQLGTIFGKSIARVEKVFRKKQVSQTKIRV. A helical transmembrane segment spans residues 234 to 254; the sequence is ISTILFILAGCIVFVTIPAVI. Residues 263 to 294 constitute an intramembrane region (pore-forming); sequence ALESIYFVVVTLTTVGFGDFVAGGNAGINYRE. Positions 276, 277, 278, and 279 each coordinate K(+). The selectivity filter 2 stretch occupies residues 276–281; it reads TVGFGD. The chain crosses the membrane as a helical span at residues 299 to 319; that stretch reads LVWFWILVGLAYFAAVLSMIG. The Cytoplasmic portion of the chain corresponds to 320–538; the sequence is DWLRVLSKKT…ENNSLLEDRN (219 aa). The segment covering 412–421 has biased composition (polar residues); sequence SQESINNRPN. Disordered stretches follow at residues 412 to 443 and 510 to 538; these read SQES…EDNI and QHAE…EDRN. The segment covering 522 to 538 has biased composition (basic and acidic residues); the sequence is DTKDREPENNSLLEDRN.

This sequence belongs to the two pore domain potassium channel (TC 1.A.1.8) family. As to quaternary structure, homodimer; disulfide-linked. Forms heterodimers with other 2-pore domain K(+) channel subunits, such as KCNK2, KCNK4 and KCNK18. Abundantly expressed in pancreas and kidney and to a lower level in brain, testis, colon, and small intestine. In brain, mainly expressed in cerebellum, occipital lobe, putamen, and thalamus. No expression is detected in amygdala and spinal cord. As to expression, strongly expressed in kidney (primarily in the proximal tubule) and pancreas. In terms of tissue distribution, abundantly expressed in brain.

It is found in the cell membrane. It carries out the reaction K(+)(in) = K(+)(out). The enzyme catalyses Rb(+)(in) = Rb(+)(out). The catalysed reaction is Cs(+)(in) = Cs(+)(out). Activated by various stimuli including acidic pH, anesthetics chloroform, halothane and isoflurane, mechanical stretch, lipids such as arachidonic, docosahexaenoic and linoleic polyunsaturated fatty acids and lysophosphatidylcholine and lysophosphatidylinositol lysophospholipids. Inhibited by norfluoxetine, the active metabolite of antidepressant fluoxetine (Prozac). Functionally, k(+) channel that conducts voltage-dependent outward rectifying currents upon membrane depolarization. Voltage sensing is coupled to K(+) electrochemical gradient in an 'ion flux gating' mode where outward but not inward ion flow opens the gate. Converts to voltage-independent 'leak' conductance mode upon stimulation by various stimuli including mechanical membrane stretch, acidic pH, heat and lipids. Homo- and heterodimerizes to form functional channels with distinct regulatory and gating properties. In trigeminal ganglia sensory neurons, the heterodimer of KCNK10/TREK-2 and KCNK18/TRESK inhibits neuronal firing and neurogenic inflammation by stabilizing the resting membrane potential at K(+) equilibrium potential as well as by regulating the threshold of action potentials and the spike frequency. Permeable to other monovalent ions such as Rb(+) and Cs(+). In Homo sapiens (Human), this protein is Potassium channel subfamily K member 10.